The sequence spans 98 residues: Aspartyl/glutamyl-tRNA(Asn/Gln) amidotransferase subunit C (98 aa).

The protein belongs to the GatC family. In terms of assembly, heterotrimer of A, B and C subunits.

The catalysed reaction is L-glutamyl-tRNA(Gln) + L-glutamine + ATP + H2O = L-glutaminyl-tRNA(Gln) + L-glutamate + ADP + phosphate + H(+). The enzyme catalyses L-aspartyl-tRNA(Asn) + L-glutamine + ATP + H2O = L-asparaginyl-tRNA(Asn) + L-glutamate + ADP + phosphate + 2 H(+). Functionally, allows the formation of correctly charged Asn-tRNA(Asn) or Gln-tRNA(Gln) through the transamidation of misacylated Asp-tRNA(Asn) or Glu-tRNA(Gln) in organisms which lack either or both of asparaginyl-tRNA or glutaminyl-tRNA synthetases. The reaction takes place in the presence of glutamine and ATP through an activated phospho-Asp-tRNA(Asn) or phospho-Glu-tRNA(Gln). In Kocuria rhizophila (strain ATCC 9341 / DSM 348 / NBRC 103217 / DC2201), this protein is Aspartyl/glutamyl-tRNA(Asn/Gln) amidotransferase subunit C.